Consider the following 564-residue polypeptide: O-fucosyltransferase 5 (564 aa).

A disordered region spans residues 1–28; the sequence is MVRNSSDEEEDHRNLIPQNDTRDNDLNL. The chain crosses the membrane as a helical; Signal-anchor for type II membrane protein span at residues 70 to 90; the sequence is YVVAAVSLTLFVGLLFLFTDT. Asn-129, Asn-134, and Asn-174 each carry an N-linked (GlcNAc...) asparagine glycan. Residues 413–415 and 529–530 contribute to the substrate site; these read HLR and TF.

This sequence belongs to the glycosyltransferase GT106 family.

The protein resides in the membrane. The protein operates within glycan metabolism. In Arabidopsis thaliana (Mouse-ear cress), this protein is O-fucosyltransferase 5.